A 396-amino-acid chain; its full sequence is Na(+)/H(+) antiporter NhaA 1 (396 aa).

Transmembrane regions (helical) follow at residues 18 to 38 (LLLI…LSWL), 60 to 80 (LLLW…GLEV), 95 to 115 (IALP…IYTG), 126 to 146 (GWAI…ALLG), 155 to 175 (LFLL…IALF), 178 to 198 (ADLS…LFIL), 201 to 221 (TGVT…ICVL), 262 to 282 (VAYG…LAGI), 295 to 315 (IAAG…WIGV), 333 to 353 (GMAV…TLAL), and 362 to 382 (AARL…YYLL).

Belongs to the NhaA Na(+)/H(+) (TC 2.A.33) antiporter family.

It is found in the cell inner membrane. It catalyses the reaction Na(+)(in) + 2 H(+)(out) = Na(+)(out) + 2 H(+)(in). In terms of biological role, na(+)/H(+) antiporter that extrudes sodium in exchange for external protons. In Syntrophotalea carbinolica (strain DSM 2380 / NBRC 103641 / GraBd1) (Pelobacter carbinolicus), this protein is Na(+)/H(+) antiporter NhaA 1.